Consider the following 346-residue polypeptide: Protein RecA (346 aa).

Residue 67 to 74 (GPESSGKT) participates in ATP binding.

The protein belongs to the RecA family.

It localises to the cytoplasm. Can catalyze the hydrolysis of ATP in the presence of single-stranded DNA, the ATP-dependent uptake of single-stranded DNA by duplex DNA, and the ATP-dependent hybridization of homologous single-stranded DNAs. It interacts with LexA causing its activation and leading to its autocatalytic cleavage. The protein is Protein RecA of Frankia alni (strain DSM 45986 / CECT 9034 / ACN14a).